We begin with the raw amino-acid sequence, 215 residues long: Probable phosphoglycerate mutase GpmB (215 aa).

Substrate-binding positions include 8–15 (RHGETQWN), 21–22 (QG), Arg-58, Lys-60, 82–85 (ELDM), 104–105 (RR), and 151–152 (GI). Catalysis depends on His-9, which acts as the Tele-phosphohistidine intermediate. Residue Glu-82 is the Proton donor/acceptor of the active site.

It belongs to the phosphoglycerate mutase family. GpmB subfamily.

The catalysed reaction is (2R)-2-phosphoglycerate = (2R)-3-phosphoglycerate. It functions in the pathway carbohydrate degradation; glycolysis; pyruvate from D-glyceraldehyde 3-phosphate: step 3/5. The protein is Probable phosphoglycerate mutase GpmB of Salmonella choleraesuis (strain SC-B67).